A 445-amino-acid polypeptide reads, in one-letter code: DDB1- and CUL4-associated factor 13 (445 aa).

K49 carries the N6-acetyllysine modification. WD repeat units follow at residues 64–104 (GHRD…CIRT), 107–146 (AHEG…YGDE), 149–191 (PLHT…PICS), 194–234 (WGFD…PLKK), 236–276 (ILDM…TPVM), 280–319 (DHVS…SREV), and 323–362 (KRMQ…KLGV). Residues 353–441 (KANASEKLGV…LVSEKKKHVV (89 aa)) are required for nucleolar location.

It belongs to the WD repeat DCAF13/WDSOF1 family. In terms of assembly, part of the small subunit (SSU) processome, composed of more than 70 proteins and the RNA chaperone small nucleolar RNA (snoRNA) U3. Component of the DCX(DCAF13) E3 ubiquitin ligase complex, at least composed of CUL4 (CUL4A or CUL4B), DDB1, DCAF13 and RBX1. Interacts (via WD40 domain) with DDB1. Interacts with ESR1 and LATS1. Expressed in the endometrium during decidualization. Expression is down-regulated in preeclampsia decidual tissues.

Its subcellular location is the nucleus. The protein localises to the nucleolus. The protein operates within protein modification; protein ubiquitination. Functionally, part of the small subunit (SSU) processome, first precursor of the small eukaryotic ribosomal subunit. During the assembly of the SSU processome in the nucleolus, many ribosome biogenesis factors, an RNA chaperone and ribosomal proteins associate with the nascent pre-rRNA and work in concert to generate RNA folding, modifications, rearrangements and cleavage as well as targeted degradation of pre-ribosomal RNA by the RNA exosome. Participates in the 18S rRNA processing in growing oocytes, being essential for oocyte nonsurrounded nucleolus (NSN) to surrounded nucleolus (SN) transition. Its function is as follows. Substrate-recognition component of a DCX (DDB1-CUL4-X-box) E3 ubiquitin-protein ligase complex that plays a key role in embryo preimplantation and is required for normal meiotic cycle progression in oocytes. Acts as a maternal factor that regulates oocyte and zygotic chromatin tightness during maternal to zygotic transition. Also involved in the transformation of the endometrium into the decidua, known as decidualization, providing a solid foundation for implantation of blastocysts. Recognizes the histone methyltransferases SUV39H1 and SUV39H2 and directs them to polyubiquitination and proteasomal degradation, which facilitates the H3K9me3 removal and early zygotic gene expression, essential steps for progressive genome reprogramming and the establishment of pluripotency during preimplantation embryonic development. Supports the spindle assembly and chromosome condensation during oocyte meiotic division by targeting the polyubiquitination and degradation of PTEN, a lipid phosphatase that inhibits PI3K pathway as well as oocyte growth and maturation. Targets PMP22 for polyubiquitination and proteasomal degradation. The polypeptide is DDB1- and CUL4-associated factor 13 (Homo sapiens (Human)).